A 204-amino-acid chain; its full sequence is N-alpha-acetyltransferase 40 (204 aa).

Positions 39 to 202 constitute an N-acetyltransferase domain; the sequence is EIYHHLEKGL…YYILYTKSRK (164 aa). Residues Tyr64, 107–109, and Tyr118 each bind substrate; that span reads TVE. Acetyl-CoA contacts are provided by residues 120–122 and 128–133; these read IQL and GRNVGK. Thr154 is a substrate binding site. Asn159 contacts acetyl-CoA. Ser176 contributes to the substrate binding site.

This sequence belongs to the acetyltransferase family. NAA40 subfamily.

It localises to the cytoplasm. The protein localises to the nucleus. The catalysed reaction is N-terminal L-seryl-[histone H4] + acetyl-CoA = N-terminal N(alpha)-acetyl-L-seryl-[histone H4] + CoA + H(+). The enzyme catalyses N-terminal L-seryl-[histone H2A] + acetyl-CoA = N-terminal N(alpha)-acetyl-L-seryl-[histone H2A] + CoA + H(+). Functionally, N-alpha-acetyltransferase that specifically mediates the acetylation of the N-terminal residues of histones H4 and H2A. The chain is N-alpha-acetyltransferase 40 from Schizosaccharomyces pombe (strain 972 / ATCC 24843) (Fission yeast).